The chain runs to 230 residues: Cytidylate kinase (230 aa).

12–20 is an ATP binding site; it reads GPSGAGKGT.

The protein belongs to the cytidylate kinase family. Type 1 subfamily.

It is found in the cytoplasm. It catalyses the reaction CMP + ATP = CDP + ADP. The enzyme catalyses dCMP + ATP = dCDP + ADP. This is Cytidylate kinase from Aeromonas salmonicida (strain A449).